The primary structure comprises 73 residues: MKAGIHPEYHMIKVVMTDGTEYETRSTWGSEGAVMNLEIDSKSHPAWTGGNQQLMDRGGRVSKFNKRFGGLGL.

This sequence belongs to the bacterial ribosomal protein bL31 family. Type A subfamily. As to quaternary structure, part of the 50S ribosomal subunit.

In terms of biological role, binds the 23S rRNA. In Rhizobium johnstonii (strain DSM 114642 / LMG 32736 / 3841) (Rhizobium leguminosarum bv. viciae), this protein is Large ribosomal subunit protein bL31.